The chain runs to 357 residues: GTPase Obg (357 aa).

In terms of domain architecture, Obg spans 1–159 (MKFVDEAFID…RNLKLELKVL (159 aa)). The 175-residue stretch at 160 to 334 (ADVGLLGMPN…LVQSIFQHVH (175 aa)) folds into the OBG-type G domain. GTP is bound by residues 166–173 (GMPNAGKS), 191–195 (FTTLH), 213–216 (DIPG), 284–287 (NKLD), and 315–317 (SAL). Residues S173 and T193 each coordinate Mg(2+).

Belongs to the TRAFAC class OBG-HflX-like GTPase superfamily. OBG GTPase family. As to quaternary structure, monomer. The cofactor is Mg(2+).

It localises to the cytoplasm. In terms of biological role, an essential GTPase which binds GTP, GDP and possibly (p)ppGpp with moderate affinity, with high nucleotide exchange rates and a fairly low GTP hydrolysis rate. Plays a role in control of the cell cycle, stress response, ribosome biogenesis and in those bacteria that undergo differentiation, in morphogenesis control. The sequence is that of GTPase Obg from Acidovorax ebreus (strain TPSY) (Diaphorobacter sp. (strain TPSY)).